We begin with the raw amino-acid sequence, 21 residues long: GLLGSLFGAGKKVACALSGLC.

C15 and C21 form a disulfide bridge.

As to expression, expressed by the skin glands.

Its subcellular location is the secreted. Functionally, has antibacterial activity against the Gram-positive bacterium S.aureus ATCC 25923 (MIC=56 uM) and the Gram-negative bacterium E.coli ATCC 25726 (MIC=28 uM). The sequence is that of Nigrocin-2HSa from Odorrana hosii (Hose's rock frog).